A 186-amino-acid chain; its full sequence is TATA-box-binding protein 2 (186 aa).

A run of 2 repeats spans residues 10–86 (IQNV…FDKL) and 101–179 (VQNI…VERI). Residues Lys53 and Lys63 each participate in a glycyl lysine isopeptide (Lys-Gly) (interchain with G-Cter in SAMP2) cross-link.

It belongs to the TBP family.

General factor that plays a role in the activation of archaeal genes transcribed by RNA polymerase. Binds specifically to the TATA box promoter element which lies close to the position of transcription initiation. This Haloferax volcanii (strain ATCC 29605 / DSM 3757 / JCM 8879 / NBRC 14742 / NCIMB 2012 / VKM B-1768 / DS2) (Halobacterium volcanii) protein is TATA-box-binding protein 2 (tbp2).